The chain runs to 798 residues: Integrin beta-1 (798 aa).

The N-terminal stretch at Met-1–Gly-20 is a signal peptide. Topologically, residues Gln-21–Asp-728 are extracellular. Positions Arg-26–His-76 constitute a PSI domain. Intrachain disulfides connect Cys-27-Cys-45, Cys-35-Cys-464, Cys-38-Cys-64, Cys-48-Cys-75, Cys-207-Cys-213, Cys-261-Cys-301, Cys-401-Cys-415, Cys-435-Cys-462, Cys-466-Cys-486, Cys-477-Cys-489, Cys-491-Cys-500, Cys-502-Cys-533, Cys-516-Cys-531, Cys-525-Cys-536, Cys-538-Cys-553, Cys-555-Cys-576, Cys-560-Cys-574, Cys-568-Cys-579, Cys-581-Cys-590, Cys-592-Cys-615, Cys-599-Cys-613, Cys-607-Cys-618, Cys-620-Cys-630, Cys-633-Cys-636, Cys-640-Cys-691, Cys-646-Cys-665, Cys-649-Cys-661, and Cys-699-Cys-723. Asn-50 is a glycosylation site (N-linked (GlcNAc...) asparagine). Positions Cys-75–Arg-84 are enriched in basic and acidic residues. Positions Cys-75–Gln-107 are disordered. 2 N-linked (GlcNAc...) asparagine glycosylation sites follow: Asn-94 and Asn-97. The 239-residue stretch at Asp-140–Leu-378 folds into the VWFA domain. Residues Ser-152 and Ser-154 each coordinate Mg(2+). The Ca(2+) site is built by Ser-154, Asp-157, Asp-158, and Glu-189. The segment at Cys-207–Cys-213 is CX3CL1-binding. A glycan (N-linked (GlcNAc...) asparagine) is linked at Asn-212. Residues Asn-244, Asp-246, Pro-248, and Glu-249 each coordinate Ca(2+). Glu-249 lines the Mg(2+) pocket. N-linked (GlcNAc...) asparagine glycosylation occurs at Asn-269. Residues Leu-295–Tyr-314 are CX3CL1-binding. Ca(2+) is bound at residue Ala-362. N-linked (GlcNAc...) asparagine glycosylation is found at Asn-363, Asn-406, and Asn-417. The interaction with TMEM182 stretch occupies residues Ile-383 to Glu-465. 4 I-EGF domains span residues Cys-466–Glu-501, Cys-502–Glu-554, Cys-555–Asp-591, and Cys-592–Glu-631. Asn-481 is a glycosylation site (N-linked (GlcNAc...) asparagine). N-linked (GlcNAc...) asparagine glycosylation occurs at Asn-520. A glycan (N-linked (GlcNAc...) asparagine) is linked at Asn-584. Asn-669 is a glycosylation site (N-linked (GlcNAc...) asparagine). A helical membrane pass occupies residues Ile-729–Leu-749. Residues Ile-750–Lys-798 lie on the Cytoplasmic side of the membrane. Residues Glu-762–Glu-767 are signal for sorting from recycling endosomes; interaction with ACAP1. Phosphothreonine is present on Thr-777. Phosphotyrosine is present on Tyr-783. Ser-785 carries the post-translational modification Phosphoserine. Positions Ser-785–Asn-792 are interaction with ITGB1BP1. A Phosphothreonine modification is found at Thr-789. The residue at position 794 (Lys-794) is an N6-acetyllysine; alternate. Lys-794 is covalently cross-linked (Glycyl lysine isopeptide (Lys-Gly) (interchain with G-Cter in SUMO1); alternate).

The protein belongs to the integrin beta chain family. Interacts with seprase FAP (seprase); the interaction occurs at the cell surface of invadopodia membrane in a collagen-dependent manner. Heterodimer of an alpha and a beta subunit. Beta-1 associates with either alpha-1, alpha-2, alpha-3, alpha-4, alpha-5, alpha-6, alpha-7, alpha-8, alpha-9, alpha-10, alpha-11 or alpha-V. ITGA6:ITGB1 is found in a complex with CD9; interaction takes place in oocytes and is involved in sperm-egg fusion. Binds LGALS3BP and NMRK2, when associated with alpha-7, but not with alpha-5. Interacts with FLNA, FLNB, FLNC and RANBP9. Interacts with KRT1 in the presence of RACK1 and SRC. Interacts with JAML; integrin alpha-4/beta-1 may regulate leukocyte to endothelial cells adhesion by controlling JAML homodimerization. Interacts with RAB21. Interacts (via the cytoplasmic region) with RAB25 (via the hypervariable C-terminal region). Interacts with MYO10. Interacts with ITGB1BP1 (via C-terminal region); the interaction is a prerequisite for focal adhesion disassembly. Interacts with TLN1; the interaction is prevented by competitive binding of ITGB1BP1. Interacts with ACAP1; required for ITGB1 recycling. Interacts with ASAP3. Interacts with FERMT2; the interaction is inhibited in presence of ITGB1BP1. Interacts with DAB2. Interacts with FGR and HCK. Interacts with alpha-7A and alpha-7B in adult skeletal muscle. Interacts with alpha-7B in cardiomyocytes of adult heart. Interacts with EMP2; the interaction may be direct or indirect and ITGB1 has a heterodimer form. ITGA5:ITGB1 interacts with CCN3. ITGA4:ITGB1 is found in a ternary complex with CX3CR1 and CX3CL1. ITGA5:ITGB1 interacts with FBN1. ITGA5:ITGB1 interacts with IL1B. Interacts with MDK. ITGA4:ITGB1 interacts with MDK; this interaction mediates MDK-induced osteoblast cells migration through PXN phosphorylation. ITGA6:ITGB1 interacts with MDK; this interaction mediates MDK-induced neurite-outgrowth. ITGA5:ITGB1 interacts with ACE2. Interacts with TMEM182 and LAMB1. Interacts with tensin TNS3; TNS3 also interacts with PEAK1, thus acting as an adapter molecule to bridge the association of PEAK1 with ITGB1. Interacts with tensin TNS4; the interaction displaces tensin TNS3 from the ITGB1 cytoplasmic tail and promotes ITGB1 stability. Integrin ITGA9:ITGB1 interacts with SPP1/OPN (via N-terminus). Integrin ITGA9:ITGB1 interacts with TNC/TNFN3 (via the 3rd Fibronectin type-III domain). Integrins ITGA4:ITGB1 and ITGA9:ITGB1 interact with SVEP1 (via Sushi domain 21); thereby inhibit Ca(2+) intracellular signaling and as a result repress vasocontraction. ITGA4:ITGB1 and ITGA5:ITGB1 interacts with SELP. Interacts with CD248. ITGA5:ITGB1 interacts with IGFBP1. ITGA4:ITGB1 interacts with BCAM. Interacts with ADGRG6. In terms of tissue distribution, expressed in the spleen, thymus, alveolar macrophages, bone marrow, liver and kidney.

Its subcellular location is the cell membrane. The protein localises to the cell projection. It localises to the invadopodium membrane. It is found in the ruffle membrane. The protein resides in the recycling endosome. Its subcellular location is the melanosome. The protein localises to the lamellipodium. It localises to the ruffle. It is found in the cell junction. The protein resides in the focal adhesion. In terms of biological role, integrins alpha-1/beta-1, alpha-2/beta-1, alpha-10/beta-1 and alpha-11/beta-1 are receptors for collagen. Integrins alpha-1/beta-1 and alpha-2/beta-2 recognize the proline-hydroxylated sequence G-F-P-G-E-R in collagen. Integrins alpha-2/beta-1, alpha-3/beta-1, alpha-4/beta-1, alpha-5/beta-1, alpha-8/beta-1, alpha-10/beta-1, alpha-11/beta-1 and alpha-V/beta-1 are receptors for fibronectin. Alpha-4/beta-1 recognizes one or more domains within the alternatively spliced CS-1 and CS-5 regions of fibronectin. Integrin alpha-5/beta-1 is a receptor for fibrinogen. Integrin alpha-1/beta-1, alpha-2/beta-1, alpha-6/beta-1 and alpha-7/beta-1 are receptors for lamimin. Integrin alpha-6/beta-1 (ITGA6:ITGB1) is present in oocytes and is involved in sperm-egg fusion. Integrin alpha-4/beta-1 is a receptor for VCAM1 and recognizes the sequence Q-I-D-S in VCAM1. Integrin alpha-9/beta-1 is a receptor for VCAM1, cytotactin and osteopontin. It recognizes the sequence A-E-I-D-G-I-E-L in cytotactin. Integrin alpha-3/beta-1 is a receptor for epiligrin, thrombospondin and CSPG4. Integrin alpha-3/beta-1 provides a docking site for FAP (seprase) at invadopodia plasma membranes in a collagen-dependent manner and hence may participate in the adhesion, formation of invadopodia and matrix degradation processes, promoting cell invasion. Alpha-3/beta-1 may mediate with LGALS3 the stimulation by CSPG4 of endothelial cells migration. Integrin alpha-V/beta-1 is a receptor for vitronectin. Beta-1 integrins recognize the sequence R-G-D in a wide array of ligands. When associated with alpha-7/beta-1 integrin, regulates cell adhesion and laminin matrix deposition. Involved in promoting endothelial cell motility and angiogenesis. Involved in osteoblast compaction through the fibronectin fibrillogenesis cell-mediated matrix assembly process and the formation of mineralized bone nodules. May be involved in up-regulation of the activity of kinases such as PKC via binding to KRT1. Together with KRT1 and RACK1, serves as a platform for SRC activation or inactivation. Plays a mechanistic adhesive role during telophase, required for the successful completion of cytokinesis. ITGA4:ITGB1 binds to fractalkine (CX3CL1) and may act as its coreceptor in CX3CR1-dependent fractalkine signaling. ITGA4:ITGB1 and ITGA5:ITGB1 bind to PLA2G2A via a site (site 2) which is distinct from the classical ligand-binding site (site 1) and this induces integrin conformational changes and enhanced ligand binding to site 1. ITGA5:ITGB1 acts as a receptor for fibrillin-1 (FBN1) and mediates R-G-D-dependent cell adhesion to FBN1. ITGA5:ITGB1 acts as a receptor for fibronectin FN1 and mediates R-G-D-dependent cell adhesion to FN1. ITGA5:ITGB1 is a receptor for IL1B and binding is essential for IL1B signaling. ITGA5:ITGB3 is a receptor for soluble CD40LG and is required for CD40/CD40LG signaling. Plays an important role in myoblast differentiation and fusion during skeletal myogenesis. ITGA9:ITGB1 may play a crucial role in SVEP1/polydom-mediated myoblast cell adhesion. Integrins ITGA9:ITGB1 and ITGA4:ITGB1 repress PRKCA-mediated L-type voltage-gated channel Ca(2+) influx and ROCK-mediated calcium sensitivity in vascular smooth muscle cells via their interaction with SVEP1, thereby inhibit vasocontraction. The protein is Integrin beta-1 (ITGB1) of Sus scrofa (Pig).